Here is a 76-residue protein sequence, read N- to C-terminus: Alpha/kappa-conotoxin-like fe14.1 (76 aa).

The first 24 residues, 1 to 24, serve as a signal peptide directing secretion; that stretch reads MPSVRSVTCCCLLWMMLSVQLVTP. Residues 25–39 constitute a propeptide that is removed on maturation; that stretch reads GSPGTAQLSGHRTAR. 2 disulfide bridges follow: Cys-46–Cys-61 and Cys-50–Cys-63. Arg-64 bears the Arginine amide mark. Residues 65–76 constitute a propeptide that is removed on maturation; that stretch reads GKRDVVSSSMAV.

It belongs to the conotoxin J superfamily. As to expression, expressed by the venom duct.

The protein resides in the secreted. Highly inhibits both nicotinic acetylcholine receptors (neuronal (alpha-3/beta-4) and muscular (alpha-1/beta-1/epsilon/delta) subtypes) and the voltage-gated potassium channel Kv1.6/KCNA6 subtype. This Conus ferrugineus (Cone snail) protein is Alpha/kappa-conotoxin-like fe14.1.